The chain runs to 291 residues: Oxidative stress-responsive serine-rich protein 1 (291 aa).

The disordered stretch occupies residues 44 to 139 (RTTVDDTKPK…STGENSTSLD (96 aa)). Basic residues predominate over residues 65–83 (STRKSSRGAVRIQRRRRSK). 2 stretches are compositionally biased toward polar residues: residues 95–113 (CSTT…SQTE) and 127–139 (KEFS…TSLD). The residue at position 143 (Thr-143) is a Phosphothreonine.

Ubiquitous with high level in testis, placenta and cardiac myocytes. In terms of tissue distribution, expressed in testis, unpreganant uterus and cardiac myocytes.

The sequence is that of Oxidative stress-responsive serine-rich protein 1 (Oser1) from Rattus norvegicus (Rat).